Here is a 274-residue protein sequence, read N- to C-terminus: MVLLPLRCLFWGSLLTTVYPEPRTACREKQYLVDSQCCNMCPPGEKLVNDCLHTIDTECTRCQTGEFLDTWNAERHCHQHKYCDPNLGLHVEKEGTSETDTTCTCDEGLHCTNAACESCTMHSLCPPGLGVKQIATGISDTICDPCPIGFFSNVSSALEKCHPWTSCETKGLVKVQAGTNKTDVICGPQPRLRALVVVPIIMGILLVVLLVSACIRKVVKKPENKVMYQDPVEDLEEFPMPPHSIAPVQETLHGCQPVTQEDGKESRISVQERV.

The first 20 residues, M1–P20, serve as a signal peptide directing secretion. The Extracellular portion of the chain corresponds to E21 to A194. 4 TNFR-Cys repeats span residues A25 to T60, R61 to C103, T104 to D144, and P145 to G187. Intrachain disulfides connect C26-C37, C38-C51, C41-C59, C62-C77, C83-C103, C105-C119, C111-C116, and C125-C143. N153 and N180 each carry an N-linked (GlcNAc...) asparagine glycan. The helical transmembrane segment at L195 to I215 threads the bilayer. Residues R216–V274 are Cytoplasmic-facing.

Monomer and homodimer. Interacts with TRAF1, TRAF2, TRAF3, TRAF5 and TRAF6. Interacts with TRAF6 and MAP3K8; the interaction is required for ERK activation.

The protein resides in the membrane. Receptor for TNFSF5/CD40LG. Transduces TRAF6- and MAP3K8-mediated signals that activate ERK in macrophages and B cells, leading to induction of immunoglobulin secretion. The polypeptide is Tumor necrosis factor receptor superfamily member 5 (CD40) (Canis lupus familiaris (Dog)).